A 430-amino-acid polypeptide reads, in one-letter code: tRNA(Ile)-lysidine synthase (430 aa).

24–29 (SGGLDS) is an ATP binding site.

The protein belongs to the tRNA(Ile)-lysidine synthase family.

The protein localises to the cytoplasm. It catalyses the reaction cytidine(34) in tRNA(Ile2) + L-lysine + ATP = lysidine(34) in tRNA(Ile2) + AMP + diphosphate + H(+). Ligates lysine onto the cytidine present at position 34 of the AUA codon-specific tRNA(Ile) that contains the anticodon CAU, in an ATP-dependent manner. Cytidine is converted to lysidine, thus changing the amino acid specificity of the tRNA from methionine to isoleucine. The chain is tRNA(Ile)-lysidine synthase from Haemophilus influenzae (strain PittEE).